A 379-amino-acid chain; its full sequence is UDP-4-amino-4-deoxy-L-arabinose--oxoglutarate aminotransferase (379 aa).

Lysine 182 carries the N6-(pyridoxal phosphate)lysine modification.

Belongs to the DegT/DnrJ/EryC1 family. ArnB subfamily. In terms of assembly, homodimer. Pyridoxal 5'-phosphate serves as cofactor.

The enzyme catalyses UDP-4-amino-4-deoxy-beta-L-arabinose + 2-oxoglutarate = UDP-beta-L-threo-pentopyranos-4-ulose + L-glutamate. It participates in nucleotide-sugar biosynthesis; UDP-4-deoxy-4-formamido-beta-L-arabinose biosynthesis; UDP-4-deoxy-4-formamido-beta-L-arabinose from UDP-alpha-D-glucuronate: step 2/3. It functions in the pathway bacterial outer membrane biogenesis; lipopolysaccharide biosynthesis. Its function is as follows. Catalyzes the conversion of UDP-4-keto-arabinose (UDP-Ara4O) to UDP-4-amino-4-deoxy-L-arabinose (UDP-L-Ara4N). The modified arabinose is attached to lipid A and is required for resistance to polymyxin and cationic antimicrobial peptides. This chain is UDP-4-amino-4-deoxy-L-arabinose--oxoglutarate aminotransferase, found in Escherichia coli O8 (strain IAI1).